The following is a 348-amino-acid chain: NADH-cytochrome b5 reductase 2 (348 aa).

Residues 41 to 61 (TLLYGAAAAAVAGAGYYFLGG) form a helical membrane-spanning segment. Positions 97-202 (QGWVSLKLEE…KGPLPKYPWT (106 aa)) constitute an FAD-binding FR-type domain. 205–240 (KHGHIALVAGGTGITPMFQLCRAIFNNPDDQTKVTL) lines the FAD pocket.

The protein belongs to the flavoprotein pyridine nucleotide cytochrome reductase family. FAD is required as a cofactor.

Its subcellular location is the mitochondrion outer membrane. The enzyme catalyses 2 Fe(III)-[cytochrome b5] + NADH = 2 Fe(II)-[cytochrome b5] + NAD(+) + H(+). May mediate the reduction of outer membrane cytochrome b5. The polypeptide is NADH-cytochrome b5 reductase 2 (MCR1) (Chaetomium globosum (strain ATCC 6205 / CBS 148.51 / DSM 1962 / NBRC 6347 / NRRL 1970) (Soil fungus)).